A 348-amino-acid chain; its full sequence is Quinone oxidoreductase-like protein 1 (348 aa).

Belongs to the zinc-containing alcohol dehydrogenase family. Quinone oxidoreductase subfamily. As to quaternary structure, component of the FERRY complex composed of five subunits, TBCK, PPP1R21, FERRY3, CRYZL1 and GATD1 with a ratio of 1:2:1:2:4, respectively.

It is found in the early endosome. In terms of biological role, component of the FERRY complex (Five-subunit Endosomal Rab5 and RNA/ribosome intermediary). The FERRY complex directly interacts with mRNAs and RAB5A, and functions as a RAB5A effector involved in the localization and the distribution of specific mRNAs most likely by mediating their endosomal transport. The complex recruits mRNAs and ribosomes to early endosomes through direct mRNA-interaction. The protein is Quinone oxidoreductase-like protein 1 (Cryzl1) of Mus musculus (Mouse).